The primary structure comprises 360 residues: MIIWLAELLQPYLSFFRLFEYLSFRAILSVLTALGLSLWMGPIMIKRLQMLQIGQVVRNEGPESHFSKRGTPTMGGIMILAAISITILLWTDLSNPYVWAVLTVLLGYGAIGFVDDYRKVVRKNTDGLIARWKYFWQSLIAFVVAFALYAYGKDTAATQLVVPFFKDIMPQLGLMYIILTYFVIVGTSNAVNLTDGLDGLAIMPTVLVAAGFAVIAWATGNVNFSEYLHIPYLPHASELVVVCTAIVGAGLGFLWFNTYPAQVFMGDVGSLALGGALGTIAVLVRQELILVIMGGVFVMETLSVILQVGSYKLRGQRIFRMAPIHHHYELKGWPEPRVIVRFWIISMVLVLIGLATLKVR.

10 helical membrane-spanning segments follow: residues 26 to 46, 70 to 90, 94 to 114, 132 to 152, 168 to 188, 199 to 219, 236 to 256, 263 to 283, 288 to 308, and 338 to 358; these read AILS…IMIK, GTPT…ILLW, SNPY…IGFV, WKYF…YAYG, IMPQ…VGTS, GLAI…AWAT, ASEL…FLWF, VFMG…IAVL, LILV…ILQV, and VIVR…ATLK.

This sequence belongs to the glycosyltransferase 4 family. MraY subfamily. The cofactor is Mg(2+).

The protein resides in the cell inner membrane. The enzyme catalyses UDP-N-acetyl-alpha-D-muramoyl-L-alanyl-gamma-D-glutamyl-meso-2,6-diaminopimeloyl-D-alanyl-D-alanine + di-trans,octa-cis-undecaprenyl phosphate = di-trans,octa-cis-undecaprenyl diphospho-N-acetyl-alpha-D-muramoyl-L-alanyl-D-glutamyl-meso-2,6-diaminopimeloyl-D-alanyl-D-alanine + UMP. It participates in cell wall biogenesis; peptidoglycan biosynthesis. Functionally, catalyzes the initial step of the lipid cycle reactions in the biosynthesis of the cell wall peptidoglycan: transfers peptidoglycan precursor phospho-MurNAc-pentapeptide from UDP-MurNAc-pentapeptide onto the lipid carrier undecaprenyl phosphate, yielding undecaprenyl-pyrophosphoryl-MurNAc-pentapeptide, known as lipid I. The sequence is that of Phospho-N-acetylmuramoyl-pentapeptide-transferase from Vibrio campbellii (strain ATCC BAA-1116).